The sequence spans 56 residues: Conotoxin reg3.9 (56 aa).

The N-terminal stretch at Leu-1–Leu-8 is a signal peptide. Positions Leu-1 to Arg-22 are disordered. A propeptide spanning residues Pro-9–Gly-40 is cleaved from the precursor. Intrachain disulfides connect Cys-41–Cys-55, Cys-42–Cys-53, and Cys-47–Cys-56.

This sequence belongs to the conotoxin M superfamily. In terms of tissue distribution, expressed by the venom duct.

The protein localises to the secreted. The protein is Conotoxin reg3.9 of Conus regius (Crown cone).